Consider the following 130-residue polypeptide: Small ribosomal subunit protein uS9 (130 aa).

The segment at 110–130 (AKERKKYGRKGARARFQFSKR) is disordered. Over residues 111–130 (KERKKYGRKGARARFQFSKR) the composition is skewed to basic residues.

It belongs to the universal ribosomal protein uS9 family.

This chain is Small ribosomal subunit protein uS9, found in Syntrophotalea carbinolica (strain DSM 2380 / NBRC 103641 / GraBd1) (Pelobacter carbinolicus).